The chain runs to 264 residues: Thiazole synthase (264 aa).

The Schiff-base intermediate with DXP role is filled by K98. 1-deoxy-D-xylulose 5-phosphate is bound by residues G159, 185–186 (AG), and 207–208 (AT).

It belongs to the ThiG family. In terms of assembly, homotetramer. Forms heterodimers with either ThiH or ThiS.

It is found in the cytoplasm. The catalysed reaction is [ThiS sulfur-carrier protein]-C-terminal-Gly-aminoethanethioate + 2-iminoacetate + 1-deoxy-D-xylulose 5-phosphate = [ThiS sulfur-carrier protein]-C-terminal Gly-Gly + 2-[(2R,5Z)-2-carboxy-4-methylthiazol-5(2H)-ylidene]ethyl phosphate + 2 H2O + H(+). It functions in the pathway cofactor biosynthesis; thiamine diphosphate biosynthesis. In terms of biological role, catalyzes the rearrangement of 1-deoxy-D-xylulose 5-phosphate (DXP) to produce the thiazole phosphate moiety of thiamine. Sulfur is provided by the thiocarboxylate moiety of the carrier protein ThiS. In vitro, sulfur can be provided by H(2)S. The protein is Thiazole synthase of Mycobacterium ulcerans (strain Agy99).